Here is a 260-residue protein sequence, read N- to C-terminus: uncharacterized protein (260 aa).

One can recognise an ABC transporter domain in the interval 4-231 (LHVDHVTHTY…PKELAAMLPF (228 aa)). 40–47 (GPSGCGKT) serves as a coordination point for ATP.

It belongs to the ABC transporter superfamily.

This is an uncharacterized protein from Bacillus subtilis (strain 168).